Here is a 258-residue protein sequence, read N- to C-terminus: Cyclohexa-1,5-dienecarbonyl-CoA hydratase (258 aa).

It belongs to the enoyl-CoA hydratase/isomerase family.

It catalyses the reaction cyclohexa-1,5-diene-1-carbonyl-CoA + H2O = 6-hydroxycyclohex-1-ene-1-carbonyl-CoA. It participates in aromatic compound metabolism; benzoyl-CoA degradation. Its function is as follows. Catalyzes the hydration of cyclohexa-1,5-diene-1-carboxyl-CoA. The protein is Cyclohexa-1,5-dienecarbonyl-CoA hydratase (dch) of Thauera aromatica.